Reading from the N-terminus, the 58-residue chain is Protein YecU (58 aa).

This Escherichia coli (strain K12) protein is Protein YecU.